Reading from the N-terminus, the 254-residue chain is Phosphoribosylaminoimidazole-succinocarboxamide synthase (254 aa).

It belongs to the SAICAR synthetase family.

The enzyme catalyses 5-amino-1-(5-phospho-D-ribosyl)imidazole-4-carboxylate + L-aspartate + ATP = (2S)-2-[5-amino-1-(5-phospho-beta-D-ribosyl)imidazole-4-carboxamido]succinate + ADP + phosphate + 2 H(+). It functions in the pathway purine metabolism; IMP biosynthesis via de novo pathway; 5-amino-1-(5-phospho-D-ribosyl)imidazole-4-carboxamide from 5-amino-1-(5-phospho-D-ribosyl)imidazole-4-carboxylate: step 1/2. This is Phosphoribosylaminoimidazole-succinocarboxamide synthase from Acidiphilium cryptum (strain JF-5).